Reading from the N-terminus, the 877-residue chain is Polycomb protein Scm (877 aa).

The disordered stretch occupies residues 1–57; that stretch reads MSGGRDSSTSSGSNSAAPGASTNATSSASASASSTSTSASPGSTTSPASTQRQRGRP. Over residues 7 to 50 the composition is skewed to low complexity; that stretch reads SSTSSGSNSAAPGASTNATSSASASASSTSTSASPGSTTSPAST. An FCS-type zinc finger spans residues 54–93; sequence RGRPAKRATCTWCGEGKLPLQYVLPTQTGKKEFCSETCIA. C63, C66, C87, and C91 together coordinate Zn(2+). MBT repeat units follow at residues 175 to 273 and 281 to 382; these read FDWD…LQPP and SSWP…MQPP. 3 disordered regions span residues 535 to 621, 652 to 692, and 713 to 735; these read NSRK…SNKV, TNTN…GGSA, and ANVK…ASLP. Residue T546 is modified to Phosphothreonine. Phosphoserine occurs at positions 549 and 550. Residues 560–569 show a composition bias toward polar residues; that stretch reads QSNSATTSPS. Residue S585 is modified to Phosphoserine. Residues 598-620 show a composition bias toward low complexity; it reads ASQQNSNHSLNNNNNSASKSSNK. Low complexity predominate over residues 724–735; the sequence is SPTTLSSSASLP. Residues 806 to 876 enclose the SAM domain; that stretch reads WTIEEVIQYI…KVNGRRNNLA (71 aa).

This sequence belongs to the SCM family. As to quaternary structure, scm associates with the PRC1 core complex containing PSC, PC, PH and Sce/RING1. Forms homotypic and heterotypic interactions. Interacts with the SAM domain of ph-p via its SAM domain in vitro. Interacts with corto in vitro.

Its subcellular location is the nucleus. Its function is as follows. Polycomb group (PcG) protein. PcG proteins act by forming multiprotein complexes, which are required to maintain the transcriptionally repressive state of homeotic genes throughout development. PcG proteins are not required to initiate repression, but to maintain it during later stages of development. They probably act via the methylation of histones, rendering chromatin heritably changed in its expressibility. The sequence is that of Polycomb protein Scm from Drosophila melanogaster (Fruit fly).